The chain runs to 281 residues: sn-glycerol-3-phosphate transport system permease protein UgpE (281 aa).

A run of 6 helical transmembrane segments spans residues 14 to 34, 82 to 104, 113 to 133, 142 to 162, 188 to 210, and 247 to 267; these read VMLI…FVAA, VMAF…AIVY, FFWL…FPTI, LDSY…TFLF, FWDI…TFIY, and WNQV…VVLL. The region spanning 77–268 is the ABC transmembrane type-1 domain; it reads LFNSFVMAFA…IPPVAVVLLM (192 aa).

The protein belongs to the binding-protein-dependent transport system permease family. UgpAE subfamily. The complex is composed of two ATP-binding proteins (UgpC), two transmembrane proteins (UgpA and UgpE) and a solute-binding protein (UgpB).

It localises to the cell inner membrane. Functionally, part of the ABC transporter complex UgpBAEC involved in sn-glycerol-3-phosphate (G3P) import. Probably responsible for the translocation of the substrate across the membrane. This is sn-glycerol-3-phosphate transport system permease protein UgpE (ugpE) from Yersinia enterocolitica serotype O:8 / biotype 1B (strain NCTC 13174 / 8081).